Consider the following 468-residue polypeptide: Ribulose bisphosphate carboxylase large chain (468 aa).

Lys-5 is modified (N6,N6,N6-trimethyllysine). Substrate-binding residues include Asn-114 and Thr-164. Catalysis depends on Lys-166, which acts as the Proton acceptor. Lys-168 is a substrate binding site. Mg(2+) contacts are provided by Lys-192, Asp-194, and Glu-195. An N6-carboxylysine modification is found at Lys-192. His-285 serves as the catalytic Proton acceptor. Substrate contacts are provided by Arg-286, His-318, and Ser-370.

The protein belongs to the RuBisCO large chain family. Type I subfamily. Heterohexadecamer of 8 large chains and 8 small chains; disulfide-linked. The disulfide link is formed within the large subunit homodimers. It depends on Mg(2+) as a cofactor. In terms of processing, the disulfide bond which can form in the large chain dimeric partners within the hexadecamer appears to be associated with oxidative stress and protein turnover.

It is found in the plastid. The protein resides in the chloroplast. The catalysed reaction is 2 (2R)-3-phosphoglycerate + 2 H(+) = D-ribulose 1,5-bisphosphate + CO2 + H2O. It carries out the reaction D-ribulose 1,5-bisphosphate + O2 = 2-phosphoglycolate + (2R)-3-phosphoglycerate + 2 H(+). In terms of biological role, ruBisCO catalyzes two reactions: the carboxylation of D-ribulose 1,5-bisphosphate, the primary event in carbon dioxide fixation, as well as the oxidative fragmentation of the pentose substrate in the photorespiration process. Both reactions occur simultaneously and in competition at the same active site. The protein is Ribulose bisphosphate carboxylase large chain of Salvia divinorum (Maria pastora).